The chain runs to 448 residues: Deoxyguanosinetriphosphate triphosphohydrolase-like protein (448 aa).

The HD domain maps to 67 to 260; it reads RLTHSLEVSQ…MELADDIAYG (194 aa).

The protein belongs to the dGTPase family. Type 2 subfamily.

The polypeptide is Deoxyguanosinetriphosphate triphosphohydrolase-like protein (Aliivibrio salmonicida (strain LFI1238) (Vibrio salmonicida (strain LFI1238))).